Reading from the N-terminus, the 542-residue chain is Zinc finger protein 280A (542 aa).

The tract at residues 66 to 185 is disordered; sequence VTPGSNSRRK…RDSKRVKLRD (120 aa). Residues 107-122 show a composition bias toward polar residues; sequence EGRSTDSPVTMKSSSE. Positions 128-143 are enriched in low complexity; that stretch reads SSPQVVSPSSSDSLPP. Residues 161–185 show a composition bias toward basic and acidic residues; sequence SSPDSKRLSTSDINSRDSKRVKLRD. 4 consecutive C2H2-type zinc fingers follow at residues 334 to 357, 364 to 387, 423 to 445, and 451 to 474; these read TTCQ…DSVH, AVCK…KDHH, LLCL…CWRH, and LQCS…TKDH. The segment covering 499–520 has biased composition (polar residues); it reads QPGSSGMASVIVSNTDPQSSPV. A disordered region spans residues 499–542; sequence QPGSSGMASVIVSNTDPQSSPVKTKKKTAMNTRDSRLPCSKDSS.

The protein resides in the nucleus. In terms of biological role, may function as a transcription factor. This is Zinc finger protein 280A (ZNF280A) from Homo sapiens (Human).